We begin with the raw amino-acid sequence, 274 residues long: tRNA pseudouridine synthase A (274 aa).

D51 (nucleophile) is an active-site residue. Substrate is bound at residue Y109.

The protein belongs to the tRNA pseudouridine synthase TruA family. In terms of assembly, homodimer.

The catalysed reaction is uridine(38/39/40) in tRNA = pseudouridine(38/39/40) in tRNA. Functionally, formation of pseudouridine at positions 38, 39 and 40 in the anticodon stem and loop of transfer RNAs. The protein is tRNA pseudouridine synthase A of Acidovorax sp. (strain JS42).